The following is a 1025-amino-acid chain: MSAAKENPCRKFQANIFNKSKCQNCFKPRESHLLNDEDLTQAKPIYGGWLLLAPDGTDFDNPVHRSRKWQRRFFILYEHGLLRYALDEMPTTLPQGTINMNQCTDVVDGEGRTGQKFSLCILTPEKEHFIRAETKEIVSGWLEMLMVYPRTNKQNQKKKRKVEPPTPQEPGPAKVAVTSSSSSSSSSSSIPSAEKVPTTKSTLWQEEMRTKDQPDGSSLSPAQSPSQSQPPAASSLREPGLESKEEESAMSSDRMDCGRKVRVESGYFSLEKTKQDLKAEEQQLPPPLSPPSPSTPNHRRSQVIEKFEALDIEKAEHMETNAVGPSPSSDTRQGRSEKRAFPRKRDFTNEAPPAPLPDASASPLSPHRRAKSLDRRSTEPSVTPDLLNFKKGWLTKQYEDGQWKKHWFVLADQSLRYYRDSVAEEAADLDGEIDLSACYDVTEYPVQRNYGFQIHTKEGEFTLSAMTSGIRRNWIQTIMKHVHPTTAPDVTSSLPEEKNKSSCSFETCPRPTEKQEAELGEPDPEQKRSRARERRREGRSKTFDWAEFRPIQQALAQERVGGVGPADTHEPLRPEAEPGELERERARRREERRKRFGMLDATDGPGTEDAALRMEVDRSPGLPMSDLKTHNVHVEIEQRWHQVETTPLREEKQVPIAPVHLSSEDGGDRLSTHELTSLLEKELEQSQKEASDLLEQNRLLQDQLRVALGREQSAREGYVLQATCERGFAAMEETHQKKIEDLQRQHQRELEKLREEKDRLLAEETAATISAIEAMKNAHREEMERELEKSQRSQISSVNSDVEALRRQYLEELQSVQRELEVLSEQYSQKCLENAHLAQALEAERQALRQCQRENQELNAHNQELNNRLAAEITRLRTLLTGDGGGEATGSPLAQGKDAYELEVLLRVKESEIQYLKQEISSLKDELQTALRDKKYASDKYKDIYTELSIAKAKADCDISRLKEQLKAATEALGEKSPDSATVSGYDIMKSKSNPDFLKKDRSCVTRQLRNIRSKSVIEQVSWDT.

The interaction with F-actin stretch occupies residues 2–383 (SAAKENPCRK…DRRSTEPSVT (382 aa)). The 108-residue stretch at 43–150 (KPIYGGWLLL…WLEMLMVYPR (108 aa)) folds into the PH 1 domain. Disordered regions lie at residues 152–302 (NKQN…RRSQ) and 317–383 (HMET…PSVT). The segment covering 179–189 (SSSSSSSSSSS) has biased composition (low complexity). Phosphoserine is present on residues Ser192, Ser217, Ser218, Ser220, Ser224, and Ser226. Low complexity predominate over residues 217–236 (SSLSPAQSPSQSQPPAASSL). Residues 239–263 (PGLESKEEESAMSSDRMDCGRKVRV) are compositionally biased toward basic and acidic residues. Phosphoserine is present on residues Ser265 and Ser269. Basic and acidic residues predominate over residues 271-281 (EKTKQDLKAEE). Pro residues predominate over residues 284 to 294 (LPPPLSPPSPS). A phosphoserine mark is found at Ser289 and Ser292. Position 295 is a phosphothreonine (Thr295). Ser326 bears the Phosphoserine mark. The segment covering 332 to 348 (RQGRSEKRAFPRKRDFT) has biased composition (basic and acidic residues). Thr348 bears the Phosphothreonine mark. 2 positions are modified to phosphoserine: Ser362 and Ser365. A PH 2 domain is found at 387 to 483 (LNFKKGWLTK…WIQTIMKHVH (97 aa)). Disordered regions lie at residues 485-545 (TTAP…TFDW) and 560-591 (VGGV…RREE). Position 493 is a phosphoserine (Ser493). Basic and acidic residues-rich tracts occupy residues 524-545 (PEQK…TFDW) and 567-589 (DTHE…ARRR). Residues 546–824 (AEFRPIQQAL…SVQRELEVLS (279 aa)) are interaction with RHOA. Position 619 is a phosphoserine (Ser619). The residue at position 646 (Thr646) is a Phosphothreonine. Residues Ser663 and Ser800 each carry the phosphoserine modification. The stretch at 673–977 (HELTSLLEKE…AATEALGEKS (305 aa)) forms a coiled coil. The segment at 824–879 (SEQYSQKCLENAHLAQALEAERQALRQCQRENQELNAHNQELNNRLAAEITRLRTL) is interaction with PPP1R12A. Residues Ser891, Ser977, Ser993, Ser1014, and Ser1016 each carry the phosphoserine modification.

Binds F-actin through its N-terminus. Interacts with MYZAP. Binds RHOA, PPP1R12A/MBS and PPP1R12C/MBS85 through adjacent coiled coil domains.

It localises to the cytoplasm. The protein resides in the cytoskeleton. Targets myosin phosphatase to the actin cytoskeleton. Required for the regulation of the actin cytoskeleton by RhoA and ROCK1. Depletion leads to an increased number of stress fibers in smooth muscle cells through stabilization of actin fibers by phosphorylated myosin. Overexpression of MRIP as well as its F-actin-binding region leads to disassembly of stress fibers in neuronal cells. In Homo sapiens (Human), this protein is Myosin phosphatase Rho-interacting protein (MPRIP).